The sequence spans 475 residues: Glycogen synthase (475 aa).

Lys15 is a binding site for ADP-alpha-D-glucose.

It belongs to the glycosyltransferase 1 family. Bacterial/plant glycogen synthase subfamily.

The enzyme catalyses [(1-&gt;4)-alpha-D-glucosyl](n) + ADP-alpha-D-glucose = [(1-&gt;4)-alpha-D-glucosyl](n+1) + ADP + H(+). The protein operates within glycan biosynthesis; glycogen biosynthesis. In terms of biological role, synthesizes alpha-1,4-glucan chains using ADP-glucose. This Anaeromyxobacter dehalogenans (strain 2CP-C) protein is Glycogen synthase.